The following is a 114-amino-acid chain: Large ribosomal subunit protein bL19 (114 aa).

This sequence belongs to the bacterial ribosomal protein bL19 family.

This protein is located at the 30S-50S ribosomal subunit interface and may play a role in the structure and function of the aminoacyl-tRNA binding site. This chain is Large ribosomal subunit protein bL19, found in Acetivibrio thermocellus (strain ATCC 27405 / DSM 1237 / JCM 9322 / NBRC 103400 / NCIMB 10682 / NRRL B-4536 / VPI 7372) (Clostridium thermocellum).